The chain runs to 395 residues: MWGLCKNHFPSNKIQVQERNKALKPKKSGSEHKTKQLFPVFNCKKKEKGVMIRFAILRNANTSLLSARSICLFTQAPTYCHVRLNTLNKSITTKRNSLTESKRHVHDGKHFFTTPHQQQQTKLGEIEEGHSPNIKEEDLRSIGQAITHQRNKRRKQIWSAIFGGIFGVIIGYSLIYKVIYLKEQSFLPLFPSSKIRKLSTRDLKKVDINQVQKLSKLRVLEILSGHDMIKEQYGVPLLDKDGNSPTLNEFSMWCEDQDPCVTGIVMEPDDKRDSSHTWYRIPFVCKWRITHRPISIRGTIDDLLNRIGLETADLFEIISPERVYGSFKYEYPLQGDSHALHLWFHGEIELDDDSLIVYNGKYHVDVKLQEIDLFRREKNGQLVQYVLYKNEAGDK.

Residues 161 to 181 (IFGGIFGVIIGYSLIYKVIYL) form a helical membrane-spanning segment.

This sequence belongs to the AIM39 family.

The protein resides in the mitochondrion membrane. This Saccharomyces cerevisiae (strain YJM789) (Baker's yeast) protein is Altered inheritance of mitochondria protein 39, mitochondrial (AIM39).